The following is a 260-amino-acid chain: tRNA pseudouridine synthase C (260 aa).

Aspartate 54 is an active-site residue.

The protein belongs to the pseudouridine synthase RluA family.

The enzyme catalyses uridine(65) in tRNA = pseudouridine(65) in tRNA. Its function is as follows. Responsible for synthesis of pseudouridine from uracil-65 in transfer RNAs. The protein is tRNA pseudouridine synthase C (truC) of Salmonella typhimurium (strain LT2 / SGSC1412 / ATCC 700720).